Consider the following 186-residue polypeptide: Nicotinamide-nucleotide adenylyltransferase (186 aa).

Belongs to the archaeal NMN adenylyltransferase family.

The protein localises to the cytoplasm. The enzyme catalyses beta-nicotinamide D-ribonucleotide + ATP + H(+) = diphosphate + NAD(+). It participates in cofactor biosynthesis; NAD(+) biosynthesis; NAD(+) from nicotinamide D-ribonucleotide: step 1/1. The polypeptide is Nicotinamide-nucleotide adenylyltransferase (Thermococcus sibiricus (strain DSM 12597 / MM 739)).